We begin with the raw amino-acid sequence, 165 residues long: Peptide methionine sulfoxide reductase MsrA (165 aa).

Cys10 is a catalytic residue.

Belongs to the MsrA Met sulfoxide reductase family.

The enzyme catalyses L-methionyl-[protein] + [thioredoxin]-disulfide + H2O = L-methionyl-(S)-S-oxide-[protein] + [thioredoxin]-dithiol. The catalysed reaction is [thioredoxin]-disulfide + L-methionine + H2O = L-methionine (S)-S-oxide + [thioredoxin]-dithiol. Functionally, has an important function as a repair enzyme for proteins that have been inactivated by oxidation. Catalyzes the reversible oxidation-reduction of methionine sulfoxide in proteins to methionine. In Campylobacter jejuni subsp. jejuni serotype O:23/36 (strain 81-176), this protein is Peptide methionine sulfoxide reductase MsrA.